The primary structure comprises 345 residues: Adenine deaminase (345 aa).

Zn(2+) contacts are provided by H20, H22, and H204. The active-site Proton donor is the E207. Residue D285 participates in Zn(2+) binding. D286 serves as a coordination point for substrate.

The protein belongs to the metallo-dependent hydrolases superfamily. Adenosine and AMP deaminases family. Adenine deaminase type 2 subfamily. Requires Zn(2+) as cofactor.

The catalysed reaction is adenine + H2O + H(+) = hypoxanthine + NH4(+). Functionally, catalyzes the hydrolytic deamination of adenine to hypoxanthine. Plays an important role in the purine salvage pathway and in nitrogen catabolism. This chain is Adenine deaminase, found in Ralstonia pickettii (strain 12J).